A 175-amino-acid chain; its full sequence is MAFMRKAAVYLGLVEDDEERYEDYDDYDDAEPHRREPREAVERDLGSRRTAVVRRMDARESSPADPAELRRVSEPAPTERPTPPLRVTTLHPRTYNEARAIGEHFREGIPVIMNLTEMDDADAKRLVDFAAGLTFGLRGSIERITSKVFLLSPRNVEVTAEDKRRMAEGGFFNQS.

The segment covering R20 to D29 has biased composition (acidic residues). The disordered stretch occupies residues R20–T88. Basic and acidic residues-rich tracts occupy residues A30 to S47 and R54 to S73.

Belongs to the SepF family. Homodimer. Interacts with FtsZ.

The protein resides in the cytoplasm. Its function is as follows. Cell division protein that is part of the divisome complex and is recruited early to the Z-ring. Probably stimulates Z-ring formation, perhaps through the cross-linking of FtsZ protofilaments. Its function overlaps with FtsA. The sequence is that of Cell division protein SepF from Acidothermus cellulolyticus (strain ATCC 43068 / DSM 8971 / 11B).